We begin with the raw amino-acid sequence, 818 residues long: Lon protease (818 aa).

One can recognise a Lon N-terminal domain in the interval 14 to 216; sequence LPVLPLRDVV…KVFALIEREI (203 aa). 370 to 377 contacts ATP; sequence GPPGVGKT. The 182-residue stretch at 605 to 786 folds into the Lon proteolytic domain; the sequence is ESLVGIVTGL…DEVIKVALMH (182 aa). Catalysis depends on residues Ser-692 and Lys-735.

Belongs to the peptidase S16 family. As to quaternary structure, homohexamer. Organized in a ring with a central cavity.

The protein localises to the cytoplasm. The enzyme catalyses Hydrolysis of proteins in presence of ATP.. In terms of biological role, ATP-dependent serine protease that mediates the selective degradation of mutant and abnormal proteins as well as certain short-lived regulatory proteins. Required for cellular homeostasis and for survival from DNA damage and developmental changes induced by stress. Degrades polypeptides processively to yield small peptide fragments that are 5 to 10 amino acids long. Binds to DNA in a double-stranded, site-specific manner. This is Lon protease from Wolbachia pipientis subsp. Culex pipiens (strain wPip).